The following is a 689-amino-acid chain: DNA polymerase epsilon subunit B (689 aa).

Basic and acidic residues predominate over residues 98–115; the sequence is EWSHEHPIQHEENILGRT. The segment at 98–155 is disordered; the sequence is EWSHEHPIQHEENILGRTDDDENNSDDEMPIAADSSLQNVSLSSPMRQPTERDEYKQP. Positions 116-126 are enriched in acidic residues; that stretch reads DDDENNSDDEM. The residue at position 122 (Ser122) is a Phosphoserine. A compositionally biased stretch (polar residues) spans 132–144; that stretch reads SSLQNVSLSSPMR. Ser141 is modified (phosphoserine; by CDC28). Residues 146 to 155 are compositionally biased toward basic and acidic residues; it reads PTERDEYKQP. Ser613 is subject to Phosphoserine.

The protein belongs to the DNA polymerase epsilon subunit B family. As to quaternary structure, DNA polymerase epsilon is a heterotetramer consisting of POL2, DPB2, DPB3 and DPB4. Phosphorylated in a cell cycle dependent manner during late G1 phase. Phosphorylation may facilitate the interaction with POL2 or the activity of DNA polymerase II. Phosphorylation is independent of DNA replication but dependent upon CDC28 in vivo. Both Ser-141 and Ser-613 are phosphorylated in vivo, but in vitro only Ser-141 is phosphorylated by CDC28.

It localises to the cytoplasm. The protein resides in the nucleus. As accessory component of the DNA polymerase epsilon complex participates in chromosomal DNA replication. It is required during synthesis of the leading and lagging DNA strands at the replication fork and binds at/or near replication origins and moves along DNA with the replication fork. It has 3'-5' proofreading exonuclease activity that correct errors arising during DNA replication. It is also involved in DNA synthesis during DNA repair. The polypeptide is DNA polymerase epsilon subunit B (DPB2) (Saccharomyces cerevisiae (strain ATCC 204508 / S288c) (Baker's yeast)).